The sequence spans 395 residues: Enolase (395 aa).

Residues His136 and Glu145 each contribute to the substrate site. Glu188 functions as the Proton donor in the catalytic mechanism. Mg(2+)-binding residues include Asp223, Glu271, and Asp296. Substrate-binding residues include Glu271 and Asp296. The active-site Proton acceptor is the Lys321. Residues 348–351 (SHRS) and Lys372 each bind substrate.

It belongs to the enolase family. Homodimer. It depends on Mg(2+) as a cofactor.

The protein localises to the cytoplasm. It carries out the reaction (2R)-2-phosphoglycerate = phosphoenolpyruvate + H2O. The protein operates within carbohydrate degradation; glycolysis; pyruvate from D-glyceraldehyde 3-phosphate: step 4/5. This chain is Enolase, found in Alligator mississippiensis (American alligator).